The chain runs to 73 residues: Large ribosomal subunit protein bL31 (73 aa).

Zn(2+)-binding residues include Cys-16, Cys-18, Cys-37, and Cys-40.

This sequence belongs to the bacterial ribosomal protein bL31 family. Type A subfamily. As to quaternary structure, part of the 50S ribosomal subunit. Zn(2+) is required as a cofactor.

Binds the 23S rRNA. The chain is Large ribosomal subunit protein bL31 from Pseudomonas fluorescens (strain ATCC BAA-477 / NRRL B-23932 / Pf-5).